Reading from the N-terminus, the 589-residue chain is Lipoprotein LpqB (589 aa).

The N-terminal stretch at 1–20 (MMRGVLVIMRLLCLGMLFTG) is a signal peptide. Cysteine 21 is lipidated: N-palmitoyl cysteine. A lipid anchor (S-diacylglycerol cysteine) is attached at cysteine 21.

The protein belongs to the LpqB lipoprotein family.

It is found in the cell membrane. In Mycobacterium leprae (strain TN), this protein is Lipoprotein LpqB.